Consider the following 321-residue polypeptide: Cyclic AMP-AMP-AMP synthase (321 aa).

Lysine 63 is an ATP binding site. Mg(2+)-binding residues include aspartate 72 and aspartate 74. Residues aspartate 74, histidine 162, lysine 185, 201-203 (KSF), and asparagine 270 contribute to the ATP site.

The protein belongs to the CD-NTase family. A01 subfamily. As to quaternary structure, forms complexes with Cap7 with 1:1 and 2:2 stoichimetry, and a 1:1:6 CdnC:Cap7:Cap6 complex. Mg(2+) is required as a cofactor.

It catalyses the reaction 3 ATP = 3',3',3'-c-tri-AMP + 3 diphosphate. The enzyme catalyses 2 ATP = 3',3'-c-di-AMP + 2 diphosphate. Its activity is regulated as follows. The 2:2 CdnC:Cap7 (Cap7 is also called HORMA) complex is activated for cAAA synthesis by long dsDNA, but not 40 bp dsDNA or ssDNA; the 1:1 complex is inactive in vitro. The 2:2:DNA complex is catalytically disassembled and inactivated by Cap6 (also called Trip13). Its function is as follows. Cyclic nucleotide synthase (second messenger synthase) of a CBASS antivirus system. CBASS (cyclic oligonucleotide-based antiphage signaling system) provides immunity against bacteriophage. The CD-NTase protein synthesizes cyclic nucleotides in response to infection; these serve as specific second messenger signals. The signals activate a diverse range of effectors, leading to bacterial cell death and thus abortive phage infection. A type III-C(AAA) CBASS system. In terms of biological role, cyclic nucleotide synthase that upon activation catalyzes the synthesis of 3',3',3'-cyclic AMP-AMP-AMP (3',3',3'-c-tri-AMP or cAAA) as the major product, and 3',3'-c-di-AMP as a minor product. Cannot use GTP as a substrate. Protects E.coli strain JP313 against bacteriophage lambda cI- infection. When the cdnC-cap7-cap6-nucC operon is transformed into a susceptible strain it confers bacteriophage immunity. Mutations in the sensor (Cap7 also called HORMA) or effector proteins (CdnC, NucC) but not the disassembly protein (Cap6 also called Trip13) no longer confer immunity. The presence of the intact operon leads to culture collapse and cell death, which occurs before the phage has finished its replication cycle, thus protecting non-infected bacteria by aborting the phage infection and preventing its propagation. The sequence is that of Cyclic AMP-AMP-AMP synthase from Escherichia coli (strain MS 115-1).